A 477-amino-acid chain; its full sequence is Bifunctional protein HldE (477 aa).

Residues 1–318 (MKVTLPEFER…ENAVRGRADT (318 aa)) form a ribokinase region. Lysine 179 carries the post-translational modification N6-acetyllysine. 195–198 (NLSE) contributes to the ATP binding site. Residue aspartate 264 is part of the active site. The tract at residues 344–477 (MTNGVFDILH…IKKIQLDKKG (134 aa)) is cytidylyltransferase.

It in the N-terminal section; belongs to the carbohydrate kinase PfkB family. This sequence in the C-terminal section; belongs to the cytidylyltransferase family. Homodimer.

The catalysed reaction is D-glycero-beta-D-manno-heptose 7-phosphate + ATP = D-glycero-beta-D-manno-heptose 1,7-bisphosphate + ADP + H(+). It catalyses the reaction D-glycero-beta-D-manno-heptose 1-phosphate + ATP + H(+) = ADP-D-glycero-beta-D-manno-heptose + diphosphate. It participates in nucleotide-sugar biosynthesis; ADP-L-glycero-beta-D-manno-heptose biosynthesis; ADP-L-glycero-beta-D-manno-heptose from D-glycero-beta-D-manno-heptose 7-phosphate: step 1/4. It functions in the pathway nucleotide-sugar biosynthesis; ADP-L-glycero-beta-D-manno-heptose biosynthesis; ADP-L-glycero-beta-D-manno-heptose from D-glycero-beta-D-manno-heptose 7-phosphate: step 3/4. Its function is as follows. Catalyzes the phosphorylation of D-glycero-D-manno-heptose 7-phosphate at the C-1 position to selectively form D-glycero-beta-D-manno-heptose-1,7-bisphosphate. Catalyzes the ADP transfer from ATP to D-glycero-beta-D-manno-heptose 1-phosphate, yielding ADP-D-glycero-beta-D-manno-heptose. In Escherichia coli O81 (strain ED1a), this protein is Bifunctional protein HldE.